The chain runs to 284 residues: Chaperone protein dnaJ 6 (284 aa).

Disordered stretches follow at residues 1–30 (MGRK…ETSL), 196–221 (NKIS…AKDS), and 252–284 (GGDA…SRGK). Positions 3–6 (RKKK) match the Nuclear localization signal motif. Residues 29–94 (SLYEVLGVER…EKRAVYDQTG (66 aa)) enclose the J domain. The short motif at 209–215 (RKRKKKK) is the Nuclear localization signal element. Over residues 255-265 (AEAEPTEEEFE) the composition is skewed to acidic residues. Positions 266-275 (AAQRRIESKR) are enriched in basic and acidic residues.

This sequence belongs to the DnaJ family. C/III subfamily. In terms of tissue distribution, highly expressed in leaves, flowers and siliques, and to lower extent in roots.

The protein resides in the nucleus. In terms of biological role, plays a continuous role in plant development probably in the structural organization of compartments. The polypeptide is Chaperone protein dnaJ 6 (ATJ6) (Arabidopsis thaliana (Mouse-ear cress)).